A 214-amino-acid polypeptide reads, in one-letter code: rRNA N(6)-adenosine-methyltransferase metl-5 (214 aa).

S-adenosyl-L-methionine-binding positions include glutamine 25, threonine 28, glycine 55, cysteine 58, aspartate 78, and 106 to 107 (DI).

The protein belongs to the methyltransferase superfamily. PrmA family. Heterodimer; heterodimerizes with TRMT112/C04H5.1.

It catalyses the reaction adenosine in rRNA + S-adenosyl-L-methionine = N(6)-methyladenosine in rRNA + S-adenosyl-L-homocysteine + H(+). In terms of biological role, catalytic subunit of a heterodimer with TRMT112/C04H5.1, which specifically methylates the 6th position of adenine in position 1717 of 18S rRNA. The polypeptide is rRNA N(6)-adenosine-methyltransferase metl-5 (Caenorhabditis elegans).